The following is a 399-amino-acid chain: Salivary protein Tsal1 (399 aa).

Residues 1 to 22 form the signal peptide; it reads MALKLVYGVFTLALLGISSVNA. A glycan (N-linked (GlcNAc...) asparagine) is linked at N268.

The protein belongs to the DNA/RNA non-specific endonuclease family. A divalent metal cation serves as cofactor. As to expression, saliva (at protein level).

It localises to the secreted. Its function is as follows. Binds double-stranded DNA (dsDNA) with high affinity. Binds double-stranded RNA. Binds single-stranded DNA with lower affinity and with a preference for purine-rich sequences. Shows residual nuclease activity for dsDNA. May facilitate blood meal intake by lowering the local viscosity created by the release of host DNA. The protein is Salivary protein Tsal1 of Glossina morsitans morsitans (Savannah tsetse fly).